The sequence spans 342 residues: Phosphoribosylformylglycinamidine cyclo-ligase (342 aa).

Belongs to the AIR synthase family.

It is found in the cytoplasm. The catalysed reaction is 2-formamido-N(1)-(5-O-phospho-beta-D-ribosyl)acetamidine + ATP = 5-amino-1-(5-phospho-beta-D-ribosyl)imidazole + ADP + phosphate + H(+). It functions in the pathway purine metabolism; IMP biosynthesis via de novo pathway; 5-amino-1-(5-phospho-D-ribosyl)imidazole from N(2)-formyl-N(1)-(5-phospho-D-ribosyl)glycinamide: step 2/2. This is Phosphoribosylformylglycinamidine cyclo-ligase from Gloeothece citriformis (strain PCC 7424) (Cyanothece sp. (strain PCC 7424)).